An 859-amino-acid chain; its full sequence is Probable helicase A859L (859 aa).

In terms of domain architecture, Helicase ATP-binding spans 178–349 (YQELRRSGRA…KNRELFGGVA (172 aa)). Residue 191–198 (MACRCGKT) coordinates ATP. Residues 298-301 (DECH) carry the DEAH box motif. The Helicase C-terminal domain maps to 394 to 553 (QIIMALAYLK…RFYEHLLNPS (160 aa)).

It belongs to the asfivirus helicase A859L family.

The chain is Probable helicase A859L from Ornithodoros (relapsing fever ticks).